The chain runs to 280 residues: Energy-coupling factor transporter ATP-binding protein EcfA1 (280 aa).

Residues 6–241 (LRTENISFQY…SHMLQEIGLD (236 aa)) enclose the ABC transporter domain. Residue 40–47 (GQNGSGKS) coordinates ATP.

The protein belongs to the ABC transporter superfamily. Energy-coupling factor EcfA family. Forms a stable energy-coupling factor (ECF) transporter complex composed of 2 membrane-embedded substrate-binding proteins (S component), 2 ATP-binding proteins (A component) and 2 transmembrane proteins (T component).

Its subcellular location is the cell membrane. In terms of biological role, ATP-binding (A) component of a common energy-coupling factor (ECF) ABC-transporter complex. Unlike classic ABC transporters this ECF transporter provides the energy necessary to transport a number of different substrates. The protein is Energy-coupling factor transporter ATP-binding protein EcfA1 of Bacillus thuringiensis subsp. konkukian (strain 97-27).